Here is a 309-residue protein sequence, read N- to C-terminus: MGINSYVSRPKGITNSNMTKMFQTIGLIGKPHHQGTNLTLTRLHHWLSMQGFKVIVEGRVSAELGADVCSMDLLEMGEHCDLAIVVGGDGNMLGAARVLARFNVAVIGVNRGNLGFLTDLPPDNFEEALSKVLSGEFETEHRFLLEAEVHRHGKITASNTAVNEAVLHPGKIAHMIQFEVYIDEQFMYSQRADGMIVSTPTGSTAYSLSAGGSILTPNLQALILVPMFPHTLSCRPIVVDACSTIKLVVSPENGENLEVSCDGHVHLAVLPGDEIFIRRSNERLRLIHPKGHNYFHVLRNKLGWGSKLF.

Residue D89 is the Proton acceptor of the active site. NAD(+)-binding positions include 89-90 (DG), 163-164 (NE), H174, R191, D193, and 204-209 (TAYSLS).

It belongs to the NAD kinase family. A divalent metal cation is required as a cofactor.

It is found in the cytoplasm. It carries out the reaction NAD(+) + ATP = ADP + NADP(+) + H(+). Its function is as follows. Involved in the regulation of the intracellular balance of NAD and NADP, and is a key enzyme in the biosynthesis of NADP. Catalyzes specifically the phosphorylation on 2'-hydroxyl of the adenosine moiety of NAD to yield NADP. This is NAD kinase from Shewanella frigidimarina (strain NCIMB 400).